The chain runs to 503 residues: Basic immunoglobulin-like variable motif-containing protein (503 aa).

The segment covering 1–26 has biased composition (basic and acidic residues); the sequence is MPNVAETERSNDSGNGEHKSERKSPE. Disordered regions lie at residues 1 to 33, 152 to 184, and 438 to 469; these read MPNV…QGAV, TTNS…ECPQ, and ESQP…GRSF. Positions 155–172 are enriched in basic residues; sequence SKHKSGNAKKQVSKRKTS. Positions 173–184 are enriched in basic and acidic residues; sequence DKKGRYQKECPQ.

Belongs to the BIVM family. As to expression, widely expressed. Expressed at higher level in spleen, ovary, small intestine, colon, peripheral blood leukocytes and liver. Also expressed in testis, ovary, aorta, appendix, trachea, pituitary gland, bladder, uterus, spinal cord, salivary gland, stomach, mammary gland and bone marrow. Weakly or not expressed in fetal spleen, adult thymus and certain cancer cell lines.

It is found in the cytoplasm. Its subcellular location is the nucleus. This is Basic immunoglobulin-like variable motif-containing protein (BIVM) from Homo sapiens (Human).